The sequence spans 169 residues: N-alpha-acetyltransferase 50 (169 aa).

The region spanning 6–155 (IELGDVTPHN…DAHVLQKNLK (150 aa)) is the N-acetyltransferase domain. A Phosphothreonine modification is found at Thr12. Position 31 (Tyr31) interacts with substrate. N6-acetyllysine occurs at positions 34 and 37. Tyr73 is an active-site residue. Met75 lines the substrate pocket. 77–90 (LGCLAPYRRLGIGT) provides a ligand contact to acetyl-CoA. Residue Tyr110 is modified to Phosphotyrosine. Residue His112 is part of the active site. 117-126 (NESAIDFYRK) contacts CoA. A substrate region spans residues 138 to 141 (YYKR). The residue at position 140 (Lys140) is an N6-acetyllysine.

This sequence belongs to the acetyltransferase family. GNAT subfamily. Component of the N-terminal acetyltransferase E (NatE) complex at least composed of NAA10, NAA15 and NAA50. Interacts with NAA10. Interacts with NAA15. Predominantly interacts with NAA15 in the N-terminal acetyltransferase A complex (NatA complex); the interactions reduce the acetylation activity of the NatA complex. Component of the N-terminal acetyltransferase E (NatE)/HYPK complex at least composed of NAA10, NAA15, NAA50 and HYPK. Within the complex interacts with NAA15. Its capacity to interact with the NatA complex is reduced by HYPK. Interacts with NAA35.

It localises to the cytoplasm. The protein resides in the nucleus. The catalysed reaction is N-terminal L-methionyl-L-alanyl-[protein] + acetyl-CoA = N-terminal N(alpha)-acetyl-L-methionyl-L-alanyl-[protein] + CoA + H(+). It catalyses the reaction N-terminal L-methionyl-L-seryl-[protein] + acetyl-CoA = N-terminal N(alpha)-acetyl-L-methionyl-L-seryl-[protein] + CoA + H(+). It carries out the reaction N-terminal L-methionyl-L-valyl-[protein] + acetyl-CoA = N-terminal N(alpha)-acetyl-L-methionyl-L-valyl-[protein] + CoA + H(+). The enzyme catalyses N-terminal L-methionyl-L-threonyl-[protein] + acetyl-CoA = N-terminal N(alpha)-acetyl-L-methionyl-L-threonyl-[protein] + CoA + H(+). The catalysed reaction is N-terminal L-methionyl-L-lysyl-[protein] + acetyl-CoA = N-terminal N(alpha)-acetyl-L-methionyl-L-lysyl-[protein] + CoA + H(+). It catalyses the reaction N-terminal L-methionyl-L-leucyl-[protein] + acetyl-CoA = N-terminal N(alpha)-acetyl-L-methionyl-L-leucyl-[protein] + CoA + H(+). It carries out the reaction N-terminal L-methionyl-L-phenylalanyl-[protein] + acetyl-CoA = N-terminal N(alpha)-acetyl-L-methionyl-L-phenylalanyl-[protein] + CoA + H(+). The enzyme catalyses N-terminal L-methionyl-L-tyrosyl-[protein] + acetyl-CoA = N-terminal N(alpha)-acetyl-L-methionyl-L-tyrosyl-[protein] + CoA + H(+). Its function is as follows. N-alpha-acetyltransferase that acetylates the N-terminus of proteins that retain their initiating methionine. Has a broad substrate specificity: able to acetylate the initiator methionine of most peptides, except for those with a proline in second position. Also displays N-epsilon-acetyltransferase activity by mediating acetylation of the side chain of specific lysines on proteins. Autoacetylates in vivo. The relevance of N-epsilon-acetyltransferase activity is however unclear: able to acetylate H4 in vitro, but this result has not been confirmed in vivo. Component of N-alpha-acetyltransferase complexes containing NAA10 and NAA15, which has N-alpha-acetyltransferase activity. Does not influence the acetyltransferase activity of NAA10. However, it negatively regulates the N-alpha-acetyltransferase activity of the N-terminal acetyltransferase A complex (also called the NatA complex). The multiprotein complexes probably constitute the major contributor for N-terminal acetylation at the ribosome exit tunnel, with NAA10 acetylating all amino termini that are devoid of methionine and NAA50 acetylating other peptides. Required for sister chromatid cohesion during mitosis by promoting binding of CDCA5/sororin to cohesin: may act by counteracting the function of NAA10. The protein is N-alpha-acetyltransferase 50 of Mus musculus (Mouse).